Here is a 203-residue protein sequence, read N- to C-terminus: Holliday junction branch migration complex subunit RuvA (203 aa).

The tract at residues 1–63 (MIGKLSGKID…EEHIHLYGFL (63 aa)) is domain I. The interval 64–142 (TIEEKNFFNL…KISTGAAIIN (79 aa)) is domain II. The interval 143–149 (DSLNIKN) is flexible linker. The tract at residues 150–203 (ITSVASNEVIKALVNLGFSRFEAQNSVQGIVIQNPEISIDELIKTALKNRNAGL) is domain III.

The protein belongs to the RuvA family. As to quaternary structure, homotetramer. Forms an RuvA(8)-RuvB(12)-Holliday junction (HJ) complex. HJ DNA is sandwiched between 2 RuvA tetramers; dsDNA enters through RuvA and exits via RuvB. An RuvB hexamer assembles on each DNA strand where it exits the tetramer. Each RuvB hexamer is contacted by two RuvA subunits (via domain III) on 2 adjacent RuvB subunits; this complex drives branch migration. In the full resolvosome a probable DNA-RuvA(4)-RuvB(12)-RuvC(2) complex forms which resolves the HJ.

The protein resides in the cytoplasm. In terms of biological role, the RuvA-RuvB-RuvC complex processes Holliday junction (HJ) DNA during genetic recombination and DNA repair, while the RuvA-RuvB complex plays an important role in the rescue of blocked DNA replication forks via replication fork reversal (RFR). RuvA specifically binds to HJ cruciform DNA, conferring on it an open structure. The RuvB hexamer acts as an ATP-dependent pump, pulling dsDNA into and through the RuvAB complex. HJ branch migration allows RuvC to scan DNA until it finds its consensus sequence, where it cleaves and resolves the cruciform DNA. This chain is Holliday junction branch migration complex subunit RuvA, found in Rickettsia akari (strain Hartford).